A 224-amino-acid polypeptide reads, in one-letter code: Probable mitochondrial import inner membrane translocase subunit Tim17 4 (224 aa).

3 consecutive transmembrane segments (helical) span residues 16-36, 60-80, and 115-135; these read CGCA…LKGF, AIAG…CVMV, and AFVG…VATI.

This sequence belongs to the Tim17/Tim22/Tim23 family. As to quaternary structure, component of the TIM23 complex at least composed of Tim23, Tim17 (Tim17a1, Tim17a2 or Tim17b1) and a Tim50. The complex interacts with the Tim44 component of the PAM complex.

It is found in the mitochondrion inner membrane. In terms of biological role, essential component of the TIM23 complex, a complex that mediates the translocation of transit peptide-containing proteins across the mitochondrial inner membrane. The protein is Probable mitochondrial import inner membrane translocase subunit Tim17 4 (Tim17a2) of Drosophila melanogaster (Fruit fly).